The primary structure comprises 832 residues: Translation initiation factor IF-2 (832 aa).

A compositionally biased stretch (basic and acidic residues) spans 1-10; the sequence is MLMSDVEKFG. Disordered regions lie at residues 1–87, 120–148, and 163–201; these read MLMS…SRSA, RDEEEVEVAPPEGESVIDEPDSVKEPAAA, and IAPGAAGTRPGRGGHDDKGKRYSYQGAGGKIKEKEGGGG. A compositionally biased stretch (gly residues) spans 11-20; sequence GDCGSSGGSG. Polar residues-rich tracts occupy residues 29 to 42 and 71 to 87; these read RASTLAKTPTSTGG and SPYTSDDNRQGQISRSA. A tr-type G domain is found at 331-500; sequence PRPPVVTVMG…LLLAEMLELR (170 aa). The G1 stretch occupies residues 340–347; the sequence is GHVDHGKT. GTP is bound at residue 340-347; the sequence is GHVDHGKT. The tract at residues 365-369 is G2; sequence GITQH. The tract at residues 386–389 is G3; sequence DTPG. Residues 386-390 and 440-443 contribute to the GTP site; these read DTPGH and NKID. The G4 stretch occupies residues 440–443; that stretch reads NKID. Positions 476 to 478 are G5; that stretch reads SAK.

Belongs to the TRAFAC class translation factor GTPase superfamily. Classic translation factor GTPase family. IF-2 subfamily.

Its subcellular location is the cytoplasm. Its function is as follows. One of the essential components for the initiation of protein synthesis. Protects formylmethionyl-tRNA from spontaneous hydrolysis and promotes its binding to the 30S ribosomal subunits. Also involved in the hydrolysis of GTP during the formation of the 70S ribosomal complex. This is Translation initiation factor IF-2 from Anaplasma marginale (strain St. Maries).